A 284-amino-acid polypeptide reads, in one-letter code: MQHQPKKKYGQNFLKDVNLLKKIVSKANLKGKNVIEIGPGKGSLTNLITKEANLLLAYEIDPTLKPFLVFDTTKIKIIYDDFLKRDLVKDFDNYFSINCQLSLISNLPYYITTTILFKIIQTPQIVDATLMMQKEVGMRLMAQPNSKNYNALSVITQYFFNIEKIQEVKSHMFFPQPKVDSVVLKLSKHKSDFNTFSTSSQKNFITFVKAAFKQKRKTLLNNLSSVFLLPKTEIILFFEQNKLLTKIRAEEITLKEFQKISIQWFLFQNKTKESQLNNYILKKV.

Residues N12, L14, G38, E59, D81, and N106 each coordinate S-adenosyl-L-methionine.

It belongs to the class I-like SAM-binding methyltransferase superfamily. rRNA adenine N(6)-methyltransferase family. RsmA subfamily.

It is found in the cytoplasm. It catalyses the reaction adenosine(1518)/adenosine(1519) in 16S rRNA + 4 S-adenosyl-L-methionine = N(6)-dimethyladenosine(1518)/N(6)-dimethyladenosine(1519) in 16S rRNA + 4 S-adenosyl-L-homocysteine + 4 H(+). Functionally, specifically dimethylates two adjacent adenosines (A1518 and A1519) in the loop of a conserved hairpin near the 3'-end of 16S rRNA in the 30S particle. May play a critical role in biogenesis of 30S subunits. This chain is Ribosomal RNA small subunit methyltransferase A, found in Phytoplasma australiense.